We begin with the raw amino-acid sequence, 87 residues long: Acyl-CoA-binding protein (87 aa).

Residue Ser-2 is modified to N-acetylserine. The region spanning 2-87 (SQAEFDKAAE…VEELKKKYGI (86 aa)) is the ACB domain. Lys-8 carries the N6-acetyllysine; alternate modification. Lys-8 is modified (N6-succinyllysine; alternate). Lys-14 is a binding site for an acyl-CoA. Position 17 is an N6-succinyllysine (Lys-17). Residue Lys-19 is modified to N6-acetyllysine. A Phosphotyrosine modification is found at Tyr-29. An acyl-CoA contacts are provided by residues 29-33 (YSHYK), Lys-51, Lys-55, and Tyr-74. Lys-51 is subject to N6-acetyllysine. Lys-55 is modified (N6-acetyllysine; alternate). Position 55 is an N6-succinyllysine; alternate (Lys-55). The residue at position 55 (Lys-55) is an N6-(2-hydroxyisobutyryl)lysine; alternate. The residue at position 55 (Lys-55) is an N6-malonyllysine; alternate. The residue at position 77 (Lys-77) is an N6-acetyllysine; alternate. Lys-77 carries the post-translational modification N6-succinyllysine; alternate.

Belongs to the ACBP family. In terms of assembly, monomer.

The protein resides in the endoplasmic reticulum. It is found in the golgi apparatus. In terms of biological role, binds medium- and long-chain acyl-CoA esters with very high affinity and may function as an intracellular carrier of acyl-CoA esters. It is also able to displace diazepam from the benzodiazepine (BZD) recognition site located on the GABA type A receptor. It is therefore possible that this protein also acts as a neuropeptide to modulate the action of the GABA receptor. This chain is Acyl-CoA-binding protein (DBI), found in Bos taurus (Bovine).